Reading from the N-terminus, the 334-residue chain is Uroporphyrinogen decarboxylase (334 aa).

Substrate contacts are provided by residues 22–26 (RQVGR), Asp-71, Tyr-140, Ser-195, and His-310.

The protein belongs to the uroporphyrinogen decarboxylase family. As to quaternary structure, homodimer.

It is found in the cytoplasm. It catalyses the reaction uroporphyrinogen III + 4 H(+) = coproporphyrinogen III + 4 CO2. The protein operates within porphyrin-containing compound metabolism; protoporphyrin-IX biosynthesis; coproporphyrinogen-III from 5-aminolevulinate: step 4/4. Its function is as follows. Catalyzes the decarboxylation of four acetate groups of uroporphyrinogen-III to yield coproporphyrinogen-III. The sequence is that of Uroporphyrinogen decarboxylase from Chlamydia muridarum (strain MoPn / Nigg).